A 208-amino-acid polypeptide reads, in one-letter code: Small ribosomal subunit protein eS8 (208 aa).

The segment at 1–23 (MGISRDSAHKRRATGGKRKSLRK) is disordered. Positions 8-23 (AHKRRATGGKRKSLRK) are enriched in basic residues.

This sequence belongs to the eukaryotic ribosomal protein eS8 family. In terms of assembly, component of the small ribosomal subunit. Identified in a IGF2BP1-dependent mRNP granule complex containing untranslated mRNAs. Part of the small subunit (SSU) processome, composed of more than 70 proteins and the RNA chaperone small nucleolar RNA (snoRNA) U3.

Its subcellular location is the cytoplasm. It localises to the membrane. It is found in the nucleus. The protein resides in the nucleolus. Its function is as follows. Component of the small ribosomal subunit. The ribosome is a large ribonucleoprotein complex responsible for the synthesis of proteins in the cell. Part of the small subunit (SSU) processome, first precursor of the small eukaryotic ribosomal subunit. During the assembly of the SSU processome in the nucleolus, many ribosome biogenesis factors, an RNA chaperone and ribosomal proteins associate with the nascent pre-rRNA and work in concert to generate RNA folding, modifications, rearrangements and cleavage as well as targeted degradation of pre-ribosomal RNA by the RNA exosome. The chain is Small ribosomal subunit protein eS8 (RpS8) from Drosophila melanogaster (Fruit fly).